Consider the following 255-residue polypeptide: tRNA (guanine-N(1)-)-methyltransferase (255 aa).

S-adenosyl-L-methionine contacts are provided by residues G113 and 133 to 138; that span reads VGDFVL.

Belongs to the RNA methyltransferase TrmD family. As to quaternary structure, homodimer.

It localises to the cytoplasm. It catalyses the reaction guanosine(37) in tRNA + S-adenosyl-L-methionine = N(1)-methylguanosine(37) in tRNA + S-adenosyl-L-homocysteine + H(+). Specifically methylates guanosine-37 in various tRNAs. The chain is tRNA (guanine-N(1)-)-methyltransferase from Francisella philomiragia subsp. philomiragia (strain ATCC 25017 / CCUG 19701 / FSC 153 / O#319-036).